The sequence spans 484 residues: Probable protein disulfide-isomerase ER-60 (484 aa).

Positions 1-14 are cleaved as a signal peptide; the sequence is MRWLLSCLFLVAFA. 2 consecutive Thioredoxin domains span residues 15–125 and 338–467; these read SCSK…SRAG and FEDG…REAT. Catalysis depends on nucleophile residues cysteine 46, cysteine 49, cysteine 388, and cysteine 391. 2 disulfide bridges follow: cysteine 46–cysteine 49 and cysteine 388–cysteine 391. A Prevents secretion from ER motif is present at residues 481–484; the sequence is KSEL.

Belongs to the protein disulfide isomerase family.

It localises to the endoplasmic reticulum lumen. The enzyme catalyses Catalyzes the rearrangement of -S-S- bonds in proteins.. The polypeptide is Probable protein disulfide-isomerase ER-60 (Schistosoma mansoni (Blood fluke)).